The primary structure comprises 351 residues: Heat shock factor protein HSF30 (351 aa).

The DNA-binding element occupies 29 to 123; that stretch reads PPPFLSKTYE…LLKTIKRRRN (95 aa).

Belongs to the HSF family. In terms of assembly, homotrimer. In terms of processing, exhibits temperature-dependent phosphorylation.

Its subcellular location is the nucleus. Functionally, DNA-binding protein that specifically binds heat shock promoter elements (HSE) and activates transcription. The chain is Heat shock factor protein HSF30 (HSF30) from Solanum peruvianum (Peruvian tomato).